A 118-amino-acid polypeptide reads, in one-letter code: Non-specific lipid-transfer protein-like 1 (118 aa).

Positions 5–113 (SDVIFEEIKE…KLRTILDPKM (109 aa)) constitute an SCP2 domain.

This is Non-specific lipid-transfer protein-like 1 (nlt-1) from Caenorhabditis elegans.